The chain runs to 780 residues: ATP-dependent 6-phosphofructokinase, muscle type (780 aa).

An N-acetylthreonine modification is found at Thr-2. The tract at residues 2–390 (THEEHHAAKT…NWEVYKLLAH (389 aa)) is N-terminal catalytic PFK domain 1. ATP is bound by residues Gly-25, 88–89 (RC), and 118–121 (GDGS). Mg(2+) is bound at residue Asp-119. Ser-133 carries the phosphoserine modification. Residues 164–166 (SID), Arg-201, 208–210 (MGR), Glu-264, Arg-292, and 298–301 (HVQR) contribute to the substrate site. The active-site Proton acceptor is the Asp-166. Ser-377 bears the Phosphoserine mark. Residues 391–401 (IRPPVSKSGSH) are interdomain linker. A C-terminal regulatory PFK domain 2 region spans residues 402–780 (TVAVMNVGAP…SRKRSGEAPA (379 aa)). Beta-D-fructose 2,6-bisphosphate is bound by residues Arg-471 and 528–532 (TVSNN). An O-linked (GlcNAc) serine glycan is attached at Ser-530. Lys-557 carries the N6-(2-hydroxyisobutyryl)lysine modification. Beta-D-fructose 2,6-bisphosphate-binding positions include Arg-566, 573–575 (MGG), Glu-629, Arg-655, and 661–664 (HMQQ). Residue Ser-667 is modified to Phosphoserine. Arg-735 is a binding site for beta-D-fructose 2,6-bisphosphate. Phosphoserine is present on Ser-775.

This sequence belongs to the phosphofructokinase type A (PFKA) family. ATP-dependent PFK group I subfamily. Eukaryotic two domain clade 'E' sub-subfamily. Homo- and heterotetramers. Phosphofructokinase (PFK) enzyme functions as a tetramer composed of different combinations of 3 types of subunits, called PFKM (M), PFKL (L) and PFKP (P). The composition of the PFK tetramer differs according to the tissue type it is present in. The kinetic and regulatory properties of the tetrameric enzyme are dependent on the subunit composition, hence can vary across tissues. Interacts (via C-terminus) with HK1 (via N-terminal spermatogenic cell-specific region). Requires Mg(2+) as cofactor. GlcNAcylation decreases enzyme activity.

The protein resides in the cytoplasm. The catalysed reaction is beta-D-fructose 6-phosphate + ATP = beta-D-fructose 1,6-bisphosphate + ADP + H(+). It participates in carbohydrate degradation; glycolysis; D-glyceraldehyde 3-phosphate and glycerone phosphate from D-glucose: step 3/4. Its activity is regulated as follows. Allosterically activated by ADP, AMP, or fructose 2,6-bisphosphate, and allosterically inhibited by ATP or citrate. Functionally, catalyzes the phosphorylation of D-fructose 6-phosphate to fructose 1,6-bisphosphate by ATP, the first committing step of glycolysis. The chain is ATP-dependent 6-phosphofructokinase, muscle type (PFKM) from Equus caballus (Horse).